Here is a 71-residue protein sequence, read N- to C-terminus: DNA-directed RNA polymerase subunit omega (71 aa).

The protein belongs to the RNA polymerase subunit omega family. The RNAP catalytic core consists of 2 alpha, 1 beta, 1 beta' and 1 omega subunit. When a sigma factor is associated with the core the holoenzyme is formed, which can initiate transcription.

The enzyme catalyses RNA(n) + a ribonucleoside 5'-triphosphate = RNA(n+1) + diphosphate. Its function is as follows. Promotes RNA polymerase assembly. Latches the N- and C-terminal regions of the beta' subunit thereby facilitating its interaction with the beta and alpha subunits. In Levilactobacillus brevis (strain ATCC 367 / BCRC 12310 / CIP 105137 / JCM 1170 / LMG 11437 / NCIMB 947 / NCTC 947) (Lactobacillus brevis), this protein is DNA-directed RNA polymerase subunit omega.